Reading from the N-terminus, the 77-residue chain is Acyl carrier protein (77 aa).

Residues methionine 1–glutamate 76 enclose the Carrier domain. O-(pantetheine 4'-phosphoryl)serine is present on serine 36.

Belongs to the acyl carrier protein (ACP) family. Post-translationally, 4'-phosphopantetheine is transferred from CoA to a specific serine of apo-ACP by AcpS. This modification is essential for activity because fatty acids are bound in thioester linkage to the sulfhydryl of the prosthetic group.

It localises to the cytoplasm. Its pathway is lipid metabolism; fatty acid biosynthesis. Its function is as follows. Carrier of the growing fatty acid chain in fatty acid biosynthesis. The chain is Acyl carrier protein from Staphylococcus saprophyticus subsp. saprophyticus (strain ATCC 15305 / DSM 20229 / NCIMB 8711 / NCTC 7292 / S-41).